A 1168-amino-acid chain; its full sequence is Transcription-repair-coupling factor (1168 aa).

In terms of domain architecture, Helicase ATP-binding spans 633 to 794 (DMQKSRPMDR…MLGVRDLSVI (162 aa)). An ATP-binding site is contributed by 646–653 (GDVGYGKT). The DEEQ box motif lies at 747–750 (DEEQ). Residues 808–969 (VLEQNMSFIK…GFKIAMRDLN (162 aa)) enclose the Helicase C-terminal domain.

It in the N-terminal section; belongs to the UvrB family. This sequence in the C-terminal section; belongs to the helicase family. RecG subfamily.

The protein localises to the cytoplasm. Couples transcription and DNA repair by recognizing RNA polymerase (RNAP) stalled at DNA lesions. Mediates ATP-dependent release of RNAP and its truncated transcript from the DNA, and recruitment of nucleotide excision repair machinery to the damaged site. This Staphylococcus aureus (strain Mu50 / ATCC 700699) protein is Transcription-repair-coupling factor.